The following is a 250-amino-acid chain: 23S rRNA (guanosine-2'-O-)-methyltransferase RlmB (250 aa).

Residues Gly-197, Ile-217, and Met-226 each contribute to the S-adenosyl-L-methionine site.

The protein belongs to the class IV-like SAM-binding methyltransferase superfamily. RNA methyltransferase TrmH family. RlmB subfamily.

The protein localises to the cytoplasm. It carries out the reaction guanosine(2251) in 23S rRNA + S-adenosyl-L-methionine = 2'-O-methylguanosine(2251) in 23S rRNA + S-adenosyl-L-homocysteine + H(+). Its function is as follows. Specifically methylates the ribose of guanosine 2251 in 23S rRNA. The polypeptide is 23S rRNA (guanosine-2'-O-)-methyltransferase RlmB (Neisseria meningitidis serogroup B (strain ATCC BAA-335 / MC58)).